A 404-amino-acid polypeptide reads, in one-letter code: RNA exonuclease 3 (404 aa).

A compositionally biased stretch (polar residues) spans 1–17; the sequence is MNNNAQNKRSLDDSNGN. A disordered region spans residues 1 to 29; it reads MNNNAQNKRSLDDSNGNDTKRPKQEDPKY. Over residues 18-28 the composition is skewed to basic and acidic residues; that stretch reads DTKRPKQEDPK. The region spanning 241–389 is the Exonuclease domain; the sequence is VLGIDCEMGF…EDSIAAIDIV (149 aa).

This sequence belongs to the REXO1/REXO3 family.

The protein localises to the cytoplasm. Its subcellular location is the nucleus. Functionally, 3' to 5' exoribonuclease required for proper 3' end maturation of MRP RNA and of the U5L snRNA. The polypeptide is RNA exonuclease 3 (REX3) (Candida albicans (strain SC5314 / ATCC MYA-2876) (Yeast)).